Consider the following 391-residue polypeptide: Putative glutamate--cysteine ligase 2-2 (391 aa).

This sequence belongs to the glutamate--cysteine ligase type 2 family. YbdK subfamily.

It catalyses the reaction L-cysteine + L-glutamate + ATP = gamma-L-glutamyl-L-cysteine + ADP + phosphate + H(+). ATP-dependent carboxylate-amine ligase which exhibits weak glutamate--cysteine ligase activity. The chain is Putative glutamate--cysteine ligase 2-2 from Saccharopolyspora erythraea (strain ATCC 11635 / DSM 40517 / JCM 4748 / NBRC 13426 / NCIMB 8594 / NRRL 2338).